A 70-amino-acid chain; its full sequence is Small ribosomal subunit protein bS21 (70 aa).

This sequence belongs to the bacterial ribosomal protein bS21 family.

In Nitratidesulfovibrio vulgaris (strain ATCC 29579 / DSM 644 / CCUG 34227 / NCIMB 8303 / VKM B-1760 / Hildenborough) (Desulfovibrio vulgaris), this protein is Small ribosomal subunit protein bS21.